A 445-amino-acid chain; its full sequence is Mitochondrial-processing peptidase subunit alpha-2 (445 aa).

The transit peptide at Met1 to Ser13 directs the protein to the mitochondrion.

It belongs to the peptidase M16 family. In terms of assembly, heterodimer of alpha and beta subunits, forming the mitochondrial processing protease (MPP) in which subunit alpha is involved in substrate recognition and binding and subunit beta is the catalytic subunit.

The protein localises to the mitochondrion matrix. Substrate recognition and binding subunit of the essential mitochondrial processing protease (MPP), which cleaves the mitochondrial sequence off newly imported precursors proteins. The protein is Mitochondrial-processing peptidase subunit alpha-2 (mppA2) of Dictyostelium discoideum (Social amoeba).